The sequence spans 292 residues: Ribosomal RNA small subunit methyltransferase A (292 aa).

S-adenosyl-L-methionine contacts are provided by asparagine 29, leucine 31, glycine 56, glutamate 77, aspartate 102, and asparagine 127.

This sequence belongs to the class I-like SAM-binding methyltransferase superfamily. rRNA adenine N(6)-methyltransferase family. RsmA subfamily.

The protein localises to the cytoplasm. The catalysed reaction is adenosine(1518)/adenosine(1519) in 16S rRNA + 4 S-adenosyl-L-methionine = N(6)-dimethyladenosine(1518)/N(6)-dimethyladenosine(1519) in 16S rRNA + 4 S-adenosyl-L-homocysteine + 4 H(+). Specifically dimethylates two adjacent adenosines (A1518 and A1519) in the loop of a conserved hairpin near the 3'-end of 16S rRNA in the 30S particle. May play a critical role in biogenesis of 30S subunits. This Bacillus subtilis (strain 168) protein is Ribosomal RNA small subunit methyltransferase A.